Consider the following 237-residue polypeptide: Ribonuclease PH (237 aa).

Phosphate is bound by residues Arg-86 and 124-126; that span reads GTR.

It belongs to the RNase PH family. Homohexameric ring arranged as a trimer of dimers.

It carries out the reaction tRNA(n+1) + phosphate = tRNA(n) + a ribonucleoside 5'-diphosphate. In terms of biological role, phosphorolytic 3'-5' exoribonuclease that plays an important role in tRNA 3'-end maturation. Removes nucleotide residues following the 3'-CCA terminus of tRNAs; can also add nucleotides to the ends of RNA molecules by using nucleoside diphosphates as substrates, but this may not be physiologically important. Probably plays a role in initiation of 16S rRNA degradation (leading to ribosome degradation) during starvation. The chain is Ribonuclease PH from Cereibacter sphaeroides (strain ATCC 17025 / ATH 2.4.3) (Rhodobacter sphaeroides).